Here is a 480-residue protein sequence, read N- to C-terminus: MTSPMTSKDSKLTLAEKVWRDHVVSQGEGDQPDLIFIDLQLLHEVTSPQAFDGLRMAGRTLRHPELHLATEDHNVPTEGIHNGSLLEINDLVSRTQVETLRKNCEEFGVRLHAMGDKKQGIVHQVGPQLGATQPGMTIVCGDSHTSTHGAFGAMAFGIGTSEVEHVMATQTLSLKPFKTMAINVTGELQPGVTAKDLILAVIATIGTGGGQGHVIEYRGEAIEKLSMEARMTVCNMSIEAGARAGMIAPDETTFDYIKGREMAPTGQDWDDAVAYWKTLPTDEGAEFDTEITIDGSAITPFITWGTNPGQGLPLSSVVPSPEDFPGDNEKVAAEKALAYMGLTPGTPLRDIAIDTVFLGSCTNARMDDLRIAADILRGRSIADSVRMMVVPSSTMIKEQAEAEGLDKIFIEAGAQWRTAGCSMCLGMNPDQLTPGERCASTSNRNFEGRQGPGGRTHLVSPAVAAATAIKGTLASPADLD.

[4Fe-4S] cluster contacts are provided by cysteine 361, cysteine 421, and cysteine 424.

This sequence belongs to the aconitase/IPM isomerase family. LeuC type 1 subfamily. As to quaternary structure, heterodimer of LeuC and LeuD. The cofactor is [4Fe-4S] cluster.

It catalyses the reaction (2R,3S)-3-isopropylmalate = (2S)-2-isopropylmalate. Its pathway is amino-acid biosynthesis; L-leucine biosynthesis; L-leucine from 3-methyl-2-oxobutanoate: step 2/4. Catalyzes the isomerization between 2-isopropylmalate and 3-isopropylmalate, via the formation of 2-isopropylmaleate. This Corynebacterium diphtheriae (strain ATCC 700971 / NCTC 13129 / Biotype gravis) protein is 3-isopropylmalate dehydratase large subunit.